A 273-amino-acid chain; its full sequence is 5-deoxy-glucuronate isomerase (273 aa).

This sequence belongs to the isomerase IolB family.

It catalyses the reaction 5-deoxy-D-glucuronate = 5-dehydro-2-deoxy-D-gluconate. It functions in the pathway polyol metabolism; myo-inositol degradation into acetyl-CoA; acetyl-CoA from myo-inositol: step 4/7. Involved in the isomerization of 5-deoxy-glucuronate (5DG) to 5-dehydro-2-deoxy-D-gluconate (DKG or 2-deoxy-5-keto-D-gluconate). In Listeria monocytogenes serotype 4a (strain HCC23), this protein is 5-deoxy-glucuronate isomerase.